Consider the following 203-residue polypeptide: MKSRNGPLRVGIGGPVGSGKTALTEKLCKAMRDDYSVAVVTNDIYTTEDAEALVRMQALTSDRIVGVETGGCPHTAIREDATINLQAIAGLNRRIPDLDVVFIESGGDNLAATFSPDLADITIYVISVCQGEEIPRKGGPGITRSDLLVINKKDLAPYVGADLEVMDRDATRMRASRPFVFSDMKRGDGVSSIVSFLREQGGL.

14–21 is a GTP binding site; it reads GPVGSGKT.

The protein belongs to the SIMIBI class G3E GTPase family. UreG subfamily. Homodimer. UreD, UreF and UreG form a complex that acts as a GTP-hydrolysis-dependent molecular chaperone, activating the urease apoprotein by helping to assemble the nickel containing metallocenter of UreC. The UreE protein probably delivers the nickel.

It is found in the cytoplasm. Functionally, facilitates the functional incorporation of the urease nickel metallocenter. This process requires GTP hydrolysis, probably effectuated by UreG. In Rhizobium johnstonii (strain DSM 114642 / LMG 32736 / 3841) (Rhizobium leguminosarum bv. viciae), this protein is Urease accessory protein UreG.